A 513-amino-acid chain; its full sequence is ATP synthase subunit alpha 2 (513 aa).

G169–T176 lines the ATP pocket.

The protein belongs to the ATPase alpha/beta chains family. As to quaternary structure, F-type ATPases have 2 components, CF(1) - the catalytic core - and CF(0) - the membrane proton channel. CF(1) has five subunits: alpha(3), beta(3), gamma(1), delta(1), epsilon(1). CF(0) has three main subunits: a(1), b(2) and c(9-12). The alpha and beta chains form an alternating ring which encloses part of the gamma chain. CF(1) is attached to CF(0) by a central stalk formed by the gamma and epsilon chains, while a peripheral stalk is formed by the delta and b chains.

It is found in the cell inner membrane. It carries out the reaction ATP + H2O + 4 H(+)(in) = ADP + phosphate + 5 H(+)(out). Produces ATP from ADP in the presence of a proton gradient across the membrane. The alpha chain is a regulatory subunit. The sequence is that of ATP synthase subunit alpha 2 from Pseudoalteromonas atlantica (strain T6c / ATCC BAA-1087).